We begin with the raw amino-acid sequence, 207 residues long: LexA repressor (207 aa).

Residues V28–A48 constitute a DNA-binding region (H-T-H motif). Active-site for autocatalytic cleavage activity residues include S129 and K167.

The protein belongs to the peptidase S24 family. As to quaternary structure, homodimer.

It carries out the reaction Hydrolysis of Ala-|-Gly bond in repressor LexA.. Functionally, represses a number of genes involved in the response to DNA damage (SOS response), including recA and lexA. In the presence of single-stranded DNA, RecA interacts with LexA causing an autocatalytic cleavage which disrupts the DNA-binding part of LexA, leading to derepression of the SOS regulon and eventually DNA repair. The sequence is that of LexA repressor from Geobacillus kaustophilus (strain HTA426).